We begin with the raw amino-acid sequence, 188 residues long: dCTP deaminase (188 aa).

DCTP-binding positions include 111–116 (KSTYAR), 135–137 (TLE), Gln156, Tyr170, and Gln180. Catalysis depends on Glu137, which acts as the Proton donor/acceptor.

The protein belongs to the dCTP deaminase family. As to quaternary structure, homotrimer.

It carries out the reaction dCTP + H2O + H(+) = dUTP + NH4(+). It functions in the pathway pyrimidine metabolism; dUMP biosynthesis; dUMP from dCTP (dUTP route): step 1/2. In terms of biological role, catalyzes the deamination of dCTP to dUTP. The protein is dCTP deaminase of Coxiella burnetii (strain CbuK_Q154) (Coxiella burnetii (strain Q154)).